The primary structure comprises 474 residues: UDP-glycosyltransferase 71C2 (474 aa).

Residues Ser-293, 352 to 354 (APQ), 369 to 377 (HCGWNSILE), and 391 to 394 (YAEQ) each bind UDP-alpha-D-glucose.

Belongs to the UDP-glycosyltransferase family.

Possesses low quercetin 3-O-glucosyltransferase, 7-O-glucosyltransferase and 3'-O-glucosyltransferase activities in vitro. Glucosylates other secondary metabolites in vitro like vanillin, trans-resveratrol, curumin and etoposide. The sequence is that of UDP-glycosyltransferase 71C2 (UGT71C2) from Arabidopsis thaliana (Mouse-ear cress).